The following is a 93-amino-acid chain: Acylphosphatase (93 aa).

An Acylphosphatase-like domain is found at 5–93 (TAILRVTGFV…EERKTFDIVY (89 aa)). Active-site residues include Arg20 and Asn38.

The protein belongs to the acylphosphatase family.

The enzyme catalyses an acyl phosphate + H2O = a carboxylate + phosphate + H(+). The protein is Acylphosphatase (acyP) of Listeria monocytogenes serotype 4b (strain F2365).